A 252-amino-acid chain; its full sequence is Chitooligosaccharide deacetylase (252 aa).

Positions 61 and 125 each coordinate Mg(2+).

Belongs to the YdjC deacetylase family. ChbG subfamily. In terms of assembly, homodimer. The cofactor is Mg(2+).

The protein resides in the cytoplasm. The enzyme catalyses N,N'-diacetylchitobiose + H2O = N-acetyl-beta-D-glucosaminyl-(1-&gt;4)-D-glucosamine + acetate. It catalyses the reaction diacetylchitobiose-6'-phosphate + H2O = N'-monoacetylchitobiose-6'-phosphate + acetate. The protein operates within glycan degradation; chitin degradation. Functionally, involved in the degradation of chitin. ChbG is essential for growth on the acetylated chitooligosaccharides chitobiose and chitotriose but is dispensable for growth on cellobiose and chitosan dimer, the deacetylated form of chitobiose. Deacetylation of chitobiose-6-P and chitotriose-6-P is necessary for both the activation of the chb promoter by the regulatory protein ChbR and the hydrolysis of phosphorylated beta-glucosides by the phospho-beta-glucosidase ChbF. Catalyzes the removal of only one acetyl group from chitobiose-6-P to yield monoacetylchitobiose-6-P, the inducer of ChbR and the substrate of ChbF. The sequence is that of Chitooligosaccharide deacetylase from Shigella flexneri serotype 5b (strain 8401).